The sequence spans 446 residues: GTPase Der (446 aa).

EngA-type G domains follow at residues 3 to 167 and 180 to 353; these read PVLA…AFDE and IRLA…ASAT. Residues 9–16, 56–60, 119–122, 186–193, 233–237, and 298–301 each bind GTP; these read GRPNVGKS, DTGGF, NKAE, DTAGL, and NKWD. In terms of domain architecture, KH-like spans 354-438; it reads KKLATPVLTR…PMRIEMKSSR (85 aa).

Belongs to the TRAFAC class TrmE-Era-EngA-EngB-Septin-like GTPase superfamily. EngA (Der) GTPase family. In terms of assembly, associates with the 50S ribosomal subunit.

In terms of biological role, GTPase that plays an essential role in the late steps of ribosome biogenesis. In Methylibium petroleiphilum (strain ATCC BAA-1232 / LMG 22953 / PM1), this protein is GTPase Der.